Consider the following 296-residue polypeptide: MRLAVTGKNGQIALALKAQARPDVEILTLGRPNFDLACRSTVASSIRDAAPDIIVSLAAYTAVDKAESEPYEAFAVNRDGVQALAEAAAGLGVPVIHLSTDYVFDGAKPVPYCEEDRTGPISVYGRSKLEGEFAVASANPNHTILRTSWVYSRYGQNFVKKMLRLADTNDELNVVADQLGCPTSADDISVAVMTIARRMLSSSSADLRGIFHLSGSGEASWAAFAKYVFSVYDEITGRQIKVHDISAAEYPTPARRPANSRLHCDKLERTFGIRLPNWEESTRRLVWALLLEGKDA.

NADH is bound by residues 10-12, 35-36, and 59-61; these read GQI, DL, and AYT. NADPH contacts are provided by residues 11-12, 35-36, and 59-61; these read QI, DL, and AYT. Residue 100 to 101 coordinates dTDP-beta-L-rhamnose; that stretch reads TD. Positions 124 and 128 each coordinate NADH. The NADPH site is built by tyrosine 124 and lysine 128. The active-site Proton donor/acceptor is the tyrosine 124. Tryptophan 149 provides a ligand contact to dTDP-beta-L-rhamnose.

Belongs to the dTDP-4-dehydrorhamnose reductase family. Homodimer. Mg(2+) is required as a cofactor.

It catalyses the reaction dTDP-beta-L-rhamnose + NADP(+) = dTDP-4-dehydro-beta-L-rhamnose + NADPH + H(+). It participates in carbohydrate biosynthesis; dTDP-L-rhamnose biosynthesis. In terms of biological role, involved in the biosynthesis of the dTDP-L-rhamnose which is an important component of lipopolysaccharide (LPS). Catalyzes the reduction of dTDP-6-deoxy-L-lyxo-4-hexulose to yield dTDP-L-rhamnose. RmlD uses NADH and NADPH nearly equally well. The chain is dTDP-4-dehydrorhamnose reductase from Sinorhizobium fredii (strain NBRC 101917 / NGR234).